The primary structure comprises 165 residues: UPF0114 protein Ent638_3411 (165 aa).

Transmembrane regions (helical) follow at residues 15–35 (LLAPVYFGLSLALVALSIKFF), 53–73 (LILVLLSLVDMTLVGGLLVMV), and 136–156 (LMWYVIIHLTFVLSAFVMGYL).

The protein belongs to the UPF0114 family.

It localises to the cell membrane. This is UPF0114 protein Ent638_3411 from Enterobacter sp. (strain 638).